The chain runs to 350 residues: Small ribosomal subunit biogenesis GTPase RsgA (350 aa).

The segment covering Met1–Asn17 has biased composition (polar residues). The interval Met1–Leu35 is disordered. In terms of domain architecture, CP-type G spans Thr103–Phe273. Residues Asn159–Asp162 and Gly213–Ser221 each bind GTP. Cys297, Cys302, His304, and Cys310 together coordinate Zn(2+).

It belongs to the TRAFAC class YlqF/YawG GTPase family. RsgA subfamily. In terms of assembly, monomer. Associates with 30S ribosomal subunit, binds 16S rRNA. Zn(2+) serves as cofactor.

The protein resides in the cytoplasm. Functionally, one of several proteins that assist in the late maturation steps of the functional core of the 30S ribosomal subunit. Helps release RbfA from mature subunits. May play a role in the assembly of ribosomal proteins into the subunit. Circularly permuted GTPase that catalyzes slow GTP hydrolysis, GTPase activity is stimulated by the 30S ribosomal subunit. The sequence is that of Small ribosomal subunit biogenesis GTPase RsgA from Yersinia pseudotuberculosis serotype O:1b (strain IP 31758).